Here is a 316-residue protein sequence, read N- to C-terminus: Lipoyl synthase (316 aa).

[4Fe-4S] cluster-binding residues include Cys-60, Cys-65, Cys-71, Cys-86, Cys-90, Cys-93, and Ser-297. One can recognise a Radical SAM core domain in the interval 72 to 286; sequence WEDREATFLI…KDEADEVGFT (215 aa).

Belongs to the radical SAM superfamily. Lipoyl synthase family. [4Fe-4S] cluster serves as cofactor.

The protein resides in the cytoplasm. The catalysed reaction is [[Fe-S] cluster scaffold protein carrying a second [4Fe-4S](2+) cluster] + N(6)-octanoyl-L-lysyl-[protein] + 2 oxidized [2Fe-2S]-[ferredoxin] + 2 S-adenosyl-L-methionine + 4 H(+) = [[Fe-S] cluster scaffold protein] + N(6)-[(R)-dihydrolipoyl]-L-lysyl-[protein] + 4 Fe(3+) + 2 hydrogen sulfide + 2 5'-deoxyadenosine + 2 L-methionine + 2 reduced [2Fe-2S]-[ferredoxin]. It participates in protein modification; protein lipoylation via endogenous pathway; protein N(6)-(lipoyl)lysine from octanoyl-[acyl-carrier-protein]: step 2/2. In terms of biological role, catalyzes the radical-mediated insertion of two sulfur atoms into the C-6 and C-8 positions of the octanoyl moiety bound to the lipoyl domains of lipoate-dependent enzymes, thereby converting the octanoylated domains into lipoylated derivatives. This is Lipoyl synthase from Nocardioides sp. (strain ATCC BAA-499 / JS614).